The primary structure comprises 363 residues: Phosphoserine aminotransferase (363 aa).

Arg46 lines the L-glutamate pocket. Residues 80-81 (AT), Trp106, Thr156, Asp176, and Gln199 contribute to the pyridoxal 5'-phosphate site. Position 200 is an N6-(pyridoxal phosphate)lysine (Lys200). 241–242 (NT) contacts pyridoxal 5'-phosphate.

It belongs to the class-V pyridoxal-phosphate-dependent aminotransferase family. SerC subfamily. In terms of assembly, homodimer. It depends on pyridoxal 5'-phosphate as a cofactor.

Its subcellular location is the cytoplasm. The catalysed reaction is O-phospho-L-serine + 2-oxoglutarate = 3-phosphooxypyruvate + L-glutamate. It catalyses the reaction 4-(phosphooxy)-L-threonine + 2-oxoglutarate = (R)-3-hydroxy-2-oxo-4-phosphooxybutanoate + L-glutamate. It participates in amino-acid biosynthesis; L-serine biosynthesis; L-serine from 3-phospho-D-glycerate: step 2/3. Its pathway is cofactor biosynthesis; pyridoxine 5'-phosphate biosynthesis; pyridoxine 5'-phosphate from D-erythrose 4-phosphate: step 3/5. Its function is as follows. Catalyzes the reversible conversion of 3-phosphohydroxypyruvate to phosphoserine and of 3-hydroxy-2-oxo-4-phosphonooxybutanoate to phosphohydroxythreonine. The polypeptide is Phosphoserine aminotransferase (Leptospira interrogans serogroup Icterohaemorrhagiae serovar copenhageni (strain Fiocruz L1-130)).